The following is a 433-amino-acid chain: Serine hydroxymethyltransferase (433 aa).

Residues Leu132 and 136–138 (GHL) contribute to the (6S)-5,6,7,8-tetrahydrofolate site. At Lys241 the chain carries N6-(pyridoxal phosphate)lysine.

Belongs to the SHMT family. As to quaternary structure, homodimer. The cofactor is pyridoxal 5'-phosphate.

It localises to the cytoplasm. The catalysed reaction is (6R)-5,10-methylene-5,6,7,8-tetrahydrofolate + glycine + H2O = (6S)-5,6,7,8-tetrahydrofolate + L-serine. It functions in the pathway one-carbon metabolism; tetrahydrofolate interconversion. Its pathway is amino-acid biosynthesis; glycine biosynthesis; glycine from L-serine: step 1/1. Its function is as follows. Catalyzes the reversible interconversion of serine and glycine with tetrahydrofolate (THF) serving as the one-carbon carrier. This reaction serves as the major source of one-carbon groups required for the biosynthesis of purines, thymidylate, methionine, and other important biomolecules. Also exhibits THF-independent aldolase activity toward beta-hydroxyamino acids, producing glycine and aldehydes, via a retro-aldol mechanism. This is Serine hydroxymethyltransferase from Rhodopseudomonas palustris (strain HaA2).